Here is a 293-residue protein sequence, read N- to C-terminus: Nucleotide-binding protein BA_5384/GBAA_5384/BAS5004 (293 aa).

14-21 (GMSGAGKT) contacts ATP. A GTP-binding site is contributed by 65–68 (DLRG).

It belongs to the RapZ-like family.

Displays ATPase and GTPase activities. This chain is Nucleotide-binding protein BA_5384/GBAA_5384/BAS5004, found in Bacillus anthracis.